We begin with the raw amino-acid sequence, 413 residues long: Multifunctional CCA protein (413 aa).

ATP is bound by residues G8 and R11. Residues G8 and R11 each coordinate CTP. The Mg(2+) site is built by D21 and D23. The ATP site is built by R91, R143, and R146. The CTP site is built by R91, R143, and R146. Positions 232–333 constitute an HD domain; that stretch reads TGVHVMMVVD…VRLFERSDAL (102 aa).

Belongs to the tRNA nucleotidyltransferase/poly(A) polymerase family. Bacterial CCA-adding enzyme type 1 subfamily. In terms of assembly, monomer. Can also form homodimers and oligomers. Mg(2+) serves as cofactor. Ni(2+) is required as a cofactor.

It catalyses the reaction a tRNA precursor + 2 CTP + ATP = a tRNA with a 3' CCA end + 3 diphosphate. The enzyme catalyses a tRNA with a 3' CCA end + 2 CTP + ATP = a tRNA with a 3' CCACCA end + 3 diphosphate. Catalyzes the addition and repair of the essential 3'-terminal CCA sequence in tRNAs without using a nucleic acid template. Adds these three nucleotides in the order of C, C, and A to the tRNA nucleotide-73, using CTP and ATP as substrates and producing inorganic pyrophosphate. tRNA 3'-terminal CCA addition is required both for tRNA processing and repair. Also involved in tRNA surveillance by mediating tandem CCA addition to generate a CCACCA at the 3' terminus of unstable tRNAs. While stable tRNAs receive only 3'-terminal CCA, unstable tRNAs are marked with CCACCA and rapidly degraded. This chain is Multifunctional CCA protein, found in Burkholderia cenocepacia (strain HI2424).